The following is a 193-amino-acid chain: Cysteine and glycine-rich protein 1 (193 aa).

An LIM zinc-binding 1 domain is found at 10 to 61 (CGVCQKTVYFAEEVQCEGNSFHKSCFLCMVCKKNLDSTTVAVHGEEIYCKSC). Residues 64–69 (KKYGPK) carry the Nuclear localization signal motif. Serine 81 is subject to Phosphoserine. N6-acetyllysine is present on lysine 84. A Glycyl lysine isopeptide (Lys-Gly) (interchain with G-Cter in SUMO2) cross-link involves residue lysine 91. Lysine 112, lysine 131, lysine 137, and lysine 161 each carry N6-acetyllysine. The LIM zinc-binding 2 domain maps to 119–170 (CPRCSQAVYAAEKVIGAGKSWHKACFRCAKCGKGLESTTLADKDGEIYCKGC). The residue at position 192 (serine 192) is a Phosphoserine.

Interacts with ASCC1; ASCC2 and TRIP4.

It is found in the nucleus. Could play a role in neuronal development. This Pongo abelii (Sumatran orangutan) protein is Cysteine and glycine-rich protein 1 (CSRP1).